The chain runs to 514 residues: MVVPFKNEPGIDFSVQTNVERFNEELRKVKAQLGQDIPLVINGEKLTKTDTFNSVNPANTSQLIAKVSKATQDDIEKAFESANHAYQSWKKWSHKDRAELLLRVAAIIRRRKEEISAIMVYEAGKPWDEAVGDAAEGIDFIEYYARSMMELADGKPVLDREGEHNRYFYKPIGTGVTIPPWNFPFAIMAGTTLAPVVAGNTVLLKPAEDTVLTAYKLMEILEEAGLPQGVVNFVPGDPKEIGDYLVDHKDTHFVTFTGSRATGTRIYERSAVVQEGQQFLKRVIAEMGGKDAIVVDNNVDTDLAAEAIVTSAFGFSGQKCSACSRAIVHQDVHDEILEKAIQLTQKLTLGNTEENTFMGPVINQKQFDKIKNYIEIGKKEGKLETGGGTDDSTGYFIEPTIFSGLQSADRIMQEEIFGPVVGFIKVKDFDEAIEVANDTDYGLTGAVITNHREHWIKAVNEFDVGNLYLNRGCTAAVVGYHPFGGFKMSGTDAKTGSPDYLLNFLEQKVVSEMF.

Active-site residues include Glu-286 and Cys-320.

Belongs to the aldehyde dehydrogenase family. RocA subfamily.

The enzyme catalyses L-glutamate 5-semialdehyde + NAD(+) + H2O = L-glutamate + NADH + 2 H(+). Its pathway is amino-acid degradation; L-proline degradation into L-glutamate; L-glutamate from L-proline: step 2/2. The sequence is that of 1-pyrroline-5-carboxylate dehydrogenase from Staphylococcus epidermidis (strain ATCC 12228 / FDA PCI 1200).